We begin with the raw amino-acid sequence, 48 residues long: Toxin CSTX-15 (48 aa).

4 disulfides stabilise this stretch: C3-C18, C10-C27, C17-C42, and C29-C40.

Belongs to the neurotoxin 19 (CSTX) family. 12 subfamily. In terms of assembly, heterodimer of A and B chains; disulfide-linked. Contains 4 disulfide bonds. As to expression, expressed by the venom gland.

The protein resides in the secreted. In Cupiennius salei (American wandering spider), this protein is Toxin CSTX-15.